A 305-amino-acid polypeptide reads, in one-letter code: GMP synthase [glutamine-hydrolyzing] subunit B (305 aa).

The GMPS ATP-PPase domain occupies 2–184 (VKPEKFIPKA…LQLPEEICER (183 aa)). 29 to 35 (SGGVDSS) is an ATP binding site.

As to quaternary structure, heterodimer composed of a glutamine amidotransferase subunit (A) and a GMP-binding subunit (B).

The enzyme catalyses XMP + L-glutamine + ATP + H2O = GMP + L-glutamate + AMP + diphosphate + 2 H(+). Its pathway is purine metabolism; GMP biosynthesis; GMP from XMP (L-Gln route): step 1/1. Its function is as follows. Catalyzes the synthesis of GMP from XMP. This is GMP synthase [glutamine-hydrolyzing] subunit B (guaAB) from Methanosarcina acetivorans (strain ATCC 35395 / DSM 2834 / JCM 12185 / C2A).